The sequence spans 170 residues: MAARFARGFVNRNPRNNELMGRQAPNTGYQFEKDRAARSYIYKVELVEGKSHREGRLVHYQDGVVISASTKEPSIASQLYSKTDTSAALNIGRVLALRCLQSGIHFAMPGATKEAIEKSQHQTHFFKALEEEGLTLKEPAHVEHSYETDKTFTWKRYPQKPTRQDKLDEL.

The protein belongs to the universal ribosomal protein uL18 family. In terms of assembly, component of the mitochondrial ribosome large subunit (39S) which comprises a 16S rRNA and about 50 distinct proteins.

Its subcellular location is the mitochondrion. This is Large ribosomal subunit protein uL18m (mrpl-18) from Caenorhabditis elegans.